The sequence spans 388 residues: MNLHEYQGKQLFAEYGLPVSKGFAVDTPEQAAEACDKIGGNEWVVKAQVHAGGRGKAGGVKLVRSKEDAKAFAAQWLGKNLVTYQTDANGQPVSKILVESCTDIAKELYLGAVVDRSSRRIVFMASTEGGVDIEKVAHETPEKILKATIDPLVGAQPFQGRELAFQLGLEGKQVQQFAKIFVGLAKLFKDHDLALLEVNPLVIKADGDLHCLDAKINIDANAMYRQPKLKTFHDPSQDDAREAHAAKFELNYVALEGNIGCMVNGAGLAMGTMDIVNLHGGKPANFLDVGGGATKERVTEAFKIILSDSNVAAVLVNIFGGIVRCDMIAEGIIGAVKEVGVKVPVVVRLEGNNAELGAKVLAESGLNIIAATSLTDAAQQVVKAAEGK.

One can recognise an ATP-grasp domain in the interval K9–H244. Residues K46, G53 to G55, E99, T102, and E107 contribute to the ATP site. Positions 199 and 213 each coordinate Mg(2+). Substrate contacts are provided by residues N264 and G321–V323.

This sequence belongs to the succinate/malate CoA ligase beta subunit family. In terms of assembly, heterotetramer of two alpha and two beta subunits. The cofactor is Mg(2+).

The catalysed reaction is succinate + ATP + CoA = succinyl-CoA + ADP + phosphate. It carries out the reaction GTP + succinate + CoA = succinyl-CoA + GDP + phosphate. It functions in the pathway carbohydrate metabolism; tricarboxylic acid cycle; succinate from succinyl-CoA (ligase route): step 1/1. Succinyl-CoA synthetase functions in the citric acid cycle (TCA), coupling the hydrolysis of succinyl-CoA to the synthesis of either ATP or GTP and thus represents the only step of substrate-level phosphorylation in the TCA. The beta subunit provides nucleotide specificity of the enzyme and binds the substrate succinate, while the binding sites for coenzyme A and phosphate are found in the alpha subunit. In Pseudomonas putida (strain ATCC 700007 / DSM 6899 / JCM 31910 / BCRC 17059 / LMG 24140 / F1), this protein is Succinate--CoA ligase [ADP-forming] subunit beta.